Reading from the N-terminus, the 160-residue chain is uncharacterized protein (160 aa).

Its subcellular location is the cytoplasm. It localises to the nucleus. This is an uncharacterized protein from Schizosaccharomyces pombe (strain 972 / ATCC 24843) (Fission yeast).